The sequence spans 88 residues: Small ribosomal subunit protein uS15 (88 aa).

Residues 1-23 (MIASSVKAEVVKSNARSANDTGS) form a disordered region. The segment covering 14–23 (NARSANDTGS) has biased composition (polar residues).

The protein belongs to the universal ribosomal protein uS15 family. Part of the 30S ribosomal subunit. Forms a bridge to the 50S subunit in the 70S ribosome, contacting the 23S rRNA.

In terms of biological role, one of the primary rRNA binding proteins, it binds directly to 16S rRNA where it helps nucleate assembly of the platform of the 30S subunit by binding and bridging several RNA helices of the 16S rRNA. Functionally, forms an intersubunit bridge (bridge B4) with the 23S rRNA of the 50S subunit in the ribosome. The sequence is that of Small ribosomal subunit protein uS15 from Delftia acidovorans (strain DSM 14801 / SPH-1).